Reading from the N-terminus, the 160-residue chain is Flavodoxin (160 aa).

In terms of domain architecture, Flavodoxin-like spans 3 to 153 (ISILYSSKTG…NARIFGERIA (151 aa)).

It belongs to the flavodoxin family. Requires FMN as cofactor.

Functionally, low-potential electron donor to a number of redox enzymes. The sequence is that of Flavodoxin (floX) from Clostridium saccharobutylicum.